Here is a 255-residue protein sequence, read N- to C-terminus: Small ribosomal subunit protein uS10m (255 aa).

The transit peptide at 1–32 directs the protein to the mitochondrion; that stretch reads MALPAARSALSARAFIRPAAALNAAASSSRYL. Disordered regions lie at residues 30-52 and 220-255; these read RYLSTTTPRHDAPVATTPGNSET and SEGEGEDQAEGVQKIVDAAREEKPAEKLKEEEAKSS. A compositionally biased stretch (basic and acidic residues) spans 236 to 255; the sequence is DAAREEKPAEKLKEEEAKSS.

It belongs to the universal ribosomal protein uS10 family. As to quaternary structure, part of the mitochondrial small ribosomal subunit.

Its subcellular location is the mitochondrion. Involved in mitochondrial genome encoded proteins translation. Involved in the binding of tRNA to the ribosomes. This chain is Small ribosomal subunit protein uS10m (RSM10), found in Cryptococcus neoformans var. neoformans serotype D (strain B-3501A) (Filobasidiella neoformans).